We begin with the raw amino-acid sequence, 312 residues long: MKVAVLGAAGGIGQALALLLKTQLPSGSELSLYDIAPVTPGVAVDLSHIPTAVKIKGFSGEDATPALEGADVVLISAGVARKPGMDRSDLFNVNAGIVKNLVQQVAKTCPKACIGIITNPVNTTVAIAAEVLKKAGVYDKNKLFGVTTLDIIRSNTFVAELKGKQPGEVEVPVIGGHSGVTILPLLSQVPGVSFTEQEVADLTKRIQNAGTEVVEAKAGGGSATLSMGQAAARFGLSLVRALQGEQGVVECAYVEGDGQYARFFSQPLLLGKNGVEERKSIGTLSAFEKNALEGMLDTLKKDIALGEEFVNK.

Residues 7-13 (GAAGGIG) and D34 contribute to the NAD(+) site. Positions 81 and 87 each coordinate substrate. Residues N94 and 117–119 (ITN) each bind NAD(+). Residues N119 and R153 each contribute to the substrate site. The active-site Proton acceptor is H177. M227 lines the NAD(+) pocket.

This sequence belongs to the LDH/MDH superfamily. MDH type 1 family. As to quaternary structure, homodimer.

It carries out the reaction (S)-malate + NAD(+) = oxaloacetate + NADH + H(+). Catalyzes the reversible oxidation of malate to oxaloacetate. In Escherichia coli O7:K1 (strain IAI39 / ExPEC), this protein is Malate dehydrogenase.